The chain runs to 542 residues: MAKDIKFSEDARRAMLRGVDQLANAVKVTLGPKGRNVVLEKKFGSPLITNDGVTIAKEIELEDPFENMGAKLVSEVASKTNDVAGDGTTTATVLAQAMIQEGLKNVTAGANPVGVRRGIEKAVATAIEELKAISKPIESKESIAQVAAISSGDEEVGKLIAEAMERVGNDGVITIEESKGFATELDVVEGMQFDRGYTSPYMVTDSDKMEAVLEKPYILITDKKINNIQEILSVLEQVVQQGRPMLIIAEDVEGEAQATLVLNKLRGTFNVVAVKAPGFGDRRKAMLEDIAVLTGGQVITEDLGLELKTATVDQLGTANKVVVTKDDTTIVEGAGDSTQISARVNQIRAQMEETTSEFDREKLQERLAKLAGGVAVVKVGAATETELKERKLRIEDALNSTRAAVEEGIVAGGGTALVSIYNKVAALEAEGDVETGINIVLRSLEEPVRQIAHNAGLEGSVIVERLKHEAVGVGFNAANGEWVNMIDAGIVDPTKVTRSALQNASSVAALLLTTEAVVADQPDENGPAAGPDMGMGGMGGMM.

Residues Thr29–Pro32, Asp86–Thr90, Gly413, Asn476–Ala478, and Asp492 contribute to the ATP site. The segment at Gln521–Met542 is disordered. Gly residues predominate over residues Met533–Met542.

This sequence belongs to the chaperonin (HSP60) family. In terms of assembly, forms a cylinder of 14 subunits composed of two heptameric rings stacked back-to-back. Interacts with the co-chaperonin GroES.

It is found in the cytoplasm. The catalysed reaction is ATP + H2O + a folded polypeptide = ADP + phosphate + an unfolded polypeptide.. Together with its co-chaperonin GroES, plays an essential role in assisting protein folding. The GroEL-GroES system forms a nano-cage that allows encapsulation of the non-native substrate proteins and provides a physical environment optimized to promote and accelerate protein folding. The polypeptide is Chaperonin GroEL (Listeria innocua serovar 6a (strain ATCC BAA-680 / CLIP 11262)).